Here is a 388-residue protein sequence, read N- to C-terminus: Protein YnjB (388 aa).

Residues 333–357 (AVWGDPSVLDPQKLPDGQRESLQSR) form a disordered region.

This Escherichia coli (strain K12) protein is Protein YnjB (ynjB).